The chain runs to 468 residues: ATP synthase subunit beta (468 aa).

An ATP-binding site is contributed by 155–162 (GGAGVGKT).

Belongs to the ATPase alpha/beta chains family. As to quaternary structure, F-type ATPases have 2 components, CF(1) - the catalytic core - and CF(0) - the membrane proton channel. CF(1) has five subunits: alpha(3), beta(3), gamma(1), delta(1), epsilon(1). CF(0) has three main subunits: a(1), b(2) and c(9-12). The alpha and beta chains form an alternating ring which encloses part of the gamma chain. CF(1) is attached to CF(0) by a central stalk formed by the gamma and epsilon chains, while a peripheral stalk is formed by the delta and b chains.

The protein localises to the cell inner membrane. It carries out the reaction ATP + H2O + 4 H(+)(in) = ADP + phosphate + 5 H(+)(out). In terms of biological role, produces ATP from ADP in the presence of a proton gradient across the membrane. The catalytic sites are hosted primarily by the beta subunits. The protein is ATP synthase subunit beta of Leptospira biflexa serovar Patoc (strain Patoc 1 / ATCC 23582 / Paris).